The chain runs to 147 residues: Hemoglobin subunit epsilon (147 aa).

Positions 3–147 constitute a Globin domain; that stretch reads HFTAEEKAAV…VAIALAHKYH (145 aa). A phosphoserine mark is found at S14 and S51. Heme b-binding residues include H64 and H93.

Belongs to the globin family. In terms of assembly, heterotetramer of two alpha chains and two epsilon chains in early embryonic hemoglobin Gower-2; two zeta chains and two epsilon chains in early embryonic hemoglobin Gower-1. As to expression, red blood cells.

Its function is as follows. The epsilon chain is a beta-type chain of early mammalian embryonic hemoglobin. The polypeptide is Hemoglobin subunit epsilon (HBE1) (Pan paniscus (Pygmy chimpanzee)).